The sequence spans 121 residues: UPF0145 protein SGR_4080 (121 aa).

The protein belongs to the UPF0145 family.

The sequence is that of UPF0145 protein SGR_4080 from Streptomyces griseus subsp. griseus (strain JCM 4626 / CBS 651.72 / NBRC 13350 / KCC S-0626 / ISP 5235).